A 431-amino-acid chain; its full sequence is Glutamate-1-semialdehyde 2,1-aminomutase (431 aa).

N6-(pyridoxal phosphate)lysine is present on lysine 265.

This sequence belongs to the class-III pyridoxal-phosphate-dependent aminotransferase family. HemL subfamily. In terms of assembly, homodimer. The cofactor is pyridoxal 5'-phosphate.

Its subcellular location is the cytoplasm. The enzyme catalyses (S)-4-amino-5-oxopentanoate = 5-aminolevulinate. The protein operates within porphyrin-containing compound metabolism; protoporphyrin-IX biosynthesis; 5-aminolevulinate from L-glutamyl-tRNA(Glu): step 2/2. The chain is Glutamate-1-semialdehyde 2,1-aminomutase from Aliivibrio salmonicida (strain LFI1238) (Vibrio salmonicida (strain LFI1238)).